Consider the following 450-residue polypeptide: 6-phospho-beta-glucosidase (450 aa).

5–73 is an NAD(+) binding site; the sequence is LKVVTIGGGS…VPMKLYKTLD (69 aa). The substrate site is built by Arg-96 and Asn-150. Mn(2+) is bound by residues Cys-172 and His-203. The active-site Proton acceptor is the Tyr-258.

In terms of assembly, homotetramer. Requires NAD(+) as cofactor. It depends on Mn(2+) as a cofactor. Co(2+) is required as a cofactor. The cofactor is Ni(2+).

It catalyses the reaction 6-phospho-beta-D-glucosyl-(1-&gt;4)-D-glucose + H2O = D-glucose 6-phosphate + D-glucose. Functionally, hydrolyzes a wide variety of P-beta-glucosides including cellobiose-6P, salicin-6P, arbutin-6P, gentiobiose-6P, methyl-beta-glucoside-6P and p-nitrophenyl-beta-D-glucopyranoside-6P. Is also able to hydrolyze phospho-N,N'-diacetylchitobiose. The sequence is that of 6-phospho-beta-glucosidase (chbF) from Escherichia coli (strain K12).